The sequence spans 520 residues: AAA-ATPase At5g57480 (520 aa).

Positions 1–24 (MKEYWTSLASLLGVLAFCQSLMQS) are cleaved as a signal peptide. Residue 244–251 (GPPGTGKS) coordinates ATP. Disordered regions lie at residues 307 to 340 (KKNS…EEGG) and 467 to 520 (NVKD…TRED). The span at 328 to 340 (SGSGSGGSGEEGG) shows a compositional bias: gly residues. Positions 497-512 (QNEDEDHDEEEIELED) are enriched in acidic residues.

The protein belongs to the AAA ATPase family. BCS1 subfamily. The cofactor is Mg(2+).

The enzyme catalyses ATP + H2O = ADP + phosphate + H(+). This is AAA-ATPase At5g57480 from Arabidopsis thaliana (Mouse-ear cress).